The following is a 244-amino-acid chain: Mediator of RNA polymerase II transcription subunit 19 (244 aa).

Disordered regions lie at residues 1–56 (MENF…PGAD) and 171–244 (PKKK…SSLR). Residues 26–47 (GKPPPPPPPPAGGGPGTAPPPT) show a composition bias toward pro residues. Residues 171 to 182 (PKKKNKHKHKQS) are compositionally biased toward basic residues. Position 194 is a phosphoserine (serine 194). Positions 212-224 (KRKKKEKKKKKNR) are enriched in basic residues. The residue at position 226 (serine 226) is a Phosphoserine. The segment covering 234-244 (SSQASSSSSLR) has biased composition (low complexity).

Belongs to the Mediator complex subunit 19 family. As to quaternary structure, component of the Mediator complex, which is composed of MED1, MED4, MED6, MED7, MED8, MED9, MED10, MED11, MED12, MED13, MED13L, MED14, MED15, MED16, MED17, MED18, MED19, MED20, MED21, MED22, MED23, MED24, MED25, MED26, MED27, MED29, MED30, MED31, CCNC, CDK8 and CDC2L6/CDK11. The MED12, MED13, CCNC and CDK8 subunits form a distinct module termed the CDK8 module. Mediator containing the CDK8 module is less active than Mediator lacking this module in supporting transcriptional activation. Individual preparations of the Mediator complex lacking one or more distinct subunits have been variously termed ARC, CRSP, DRIP, PC2, SMCC and TRAP.

It is found in the nucleus. Functionally, component of the Mediator complex, a coactivator involved in the regulated transcription of nearly all RNA polymerase II-dependent genes. Mediator functions as a bridge to convey information from gene-specific regulatory proteins to the basal RNA polymerase II transcription machinery. Mediator is recruited to promoters by direct interactions with regulatory proteins and serves as a scaffold for the assembly of a functional preinitiation complex with RNA polymerase II and the general transcription factors. The chain is Mediator of RNA polymerase II transcription subunit 19 (MED19) from Homo sapiens (Human).